The following is a 911-amino-acid chain: Band 3 anion transport protein (911 aa).

An N-acetylmethionine modification is found at methionine 1. The span at 1–26 (MEELQDDYEDMMEENLEQEEYEDPDI) shows a compositional bias: acidic residues. A disordered region spans residues 1-40 (MEELQDDYEDMMEENLEQEEYEDPDIPESQMEEPAAHDTE). At 1 to 403 (MEELQDDYED…LSDITDAFSP (403 aa)) the chain is on the cytoplasmic side. A phosphotyrosine mark is found at tyrosine 8, tyrosine 21, and tyrosine 46. The (Microbial infection) Interaction with P.falciparum (isolate K1) FBPA stretch occupies residues 13 to 31 (EENLEQEEYEDPDIPESQM). The tract at residues 55–290 (HKVYVELQEL…LGRAAATLMS (236 aa)) is globular. The interaction with ANK1 stretch occupies residues 176 to 185 (AVLTRSGDPS). Serine 185 and serine 350 each carry phosphoserine. Residues 304-357 (RGELLHSLEGFLDCSLVLPPTDAPSEQALLSLVPVQRELLRRRYQSSPAKPDSS) form a dimerization arm region. A Phosphotyrosine modification is found at tyrosine 359. Residues 404–427 (QVLAAVIFIYFAALSPAITFGGLL) form a helical membrane-spanning segment. The Extracellular portion of the chain corresponds to 428–435 (GEKTRNQM). Residues 436 to 456 (GVSELLISTAVQGILFALLGA) form a helical membrane-spanning segment. Topologically, residues 457–459 (QPL) are cytoplasmic. Residues 460 to 476 (LVVGFSGPLLVFEEAFF) form a discontinuously helical membrane-spanning segment. Residues 477 to 485 (SFCETNGLE) lie on the Extracellular side of the membrane. Residues 486–506 (YIVGRVWIGFWLILLVVLVVA) traverse the membrane as a helical segment. Residues 507-518 (FEGSFLVRFISR) lie on the Cytoplasmic side of the membrane. The chain crosses the membrane as a helical span at residues 519-541 (YTQEIFSFLISLIFIYETFSKLI). Residues 542–570 (KIFQDHPLQKTYNYNVLMVPKPQGPLPNT) lie on the Extracellular side of the membrane. Residues 559 to 630 (MVPKPQGPLP…DFFIQDTYTQ (72 aa)) are involved in anion transport. Residues 571 to 591 (ALLSLVLMAGTFFFAMMLRKF) form a helical membrane-spanning segment. Residues 592–602 (KNSSYFPGKLR) are Cytoplasmic-facing. A helical membrane pass occupies residues 603-623 (RVIGDFGVPISILIMVLVDFF). Residues 624–663 (IQDTYTQKLSVPDGFKVSNSSARGWVIHPLGLRSEFPIWM) are Extracellular-facing. N-linked (GlcNAc...) (complex) asparagine glycosylation is present at asparagine 642. Residues 664–684 (MFASALPALLVFILIFLESQI) form a helical membrane-spanning segment. The Cytoplasmic segment spans residues 685–700 (TTLIVSKPERKMVKGS). A helical transmembrane segment spans residues 701–719 (GFHLDLLLVVGMGGVAALF). The chain crosses the membrane as a discontinuously helical span at residues 720-737 (GMPWLSATTVRSVTHANA). Positions 720 to 761 (GMPWLSATTVRSVTHANALTVMGKASTPGAAAQIQEVKEQRI) are (Microbial infection) 5ABC region; interaction with P.falciparum (isolate 3D7) MSP9. At 738–760 (LTVMGKASTPGAAAQIQEVKEQR) the chain is on the cytoplasmic side. Transmembrane regions (helical) follow at residues 761 to 781 (ISGL…PILS) and 782 to 800 (RIPL…VTSL). The Cytoplasmic segment spans residues 801-838 (SGIQLFDRILLLFKPPKYHPDVPYVKRVKTWRMHLFTG). The segment at residues 839–869 (IQIICLAVLWVVKSTPASLALPFVLILTVPL) is an intramembrane region (discontinuously helical). A lipid anchor (S-palmitoyl cysteine) is attached at cysteine 843. Over 870–911 (RRVLLPLIFRNVELQCLDADDAKATFDEEEGRDEYDEVAMPV) the chain is Cytoplasmic. A Phosphotyrosine modification is found at tyrosine 904.

The protein belongs to the anion exchanger (TC 2.A.31) family. A dimer in solution, but in its membrane environment, it exists primarily as a mixture of dimers and tetramers and spans the membrane asymmetrically. Component of the ankyrin-1 complex in the erythrocyte, composed of ANK1, RHCE, RHAG, SLC4A1, EPB42, GYPA, GYPB and AQP1. Interacts with STOM; this interaction positively regulates SLC4A1 activity. Interacts with GYPA; a GYPA monomer is bound at each end of the SLC4A1 dimer forming a heterotetramer. Three SLC4A1 dimers (Band 3-I, Band 3-II and Band 3-III) participates in the ankyrin-1 complex. Interacts (via the cytoplasmic domain) with EPB42; this interaction is mediated by the SLC4A1 Band 3-I dimer. Interacts (via the cytoplasmic domain) directly with ANK1; this interaction is mediated by the SLC4A1 Band 3-II and Band 3-III dimers. As to quaternary structure, interacts with TMEM139. In terms of assembly, (Microbial infection) Interacts (via N-terminus) with P.falciparum (isolate K1) aldolase FBPA; the interaction inhibits FBPA catalytic activity. (Microbial infection) Interacts (via the 5ABC region) with P.falciparum (isolate 3D7) MSP9/ABRA (via N-terminus). As to quaternary structure, (Microbial infection) Interacts (via the 5ABC region) with P.falciparum (isolate 3D7) MSP1 p42 subunit. Phosphorylated on Tyr-8 and Tyr-21 most likely by SYK. PP1-resistant phosphorylation that precedes Tyr-359 and Tyr-904 phosphorylation. Post-translationally, phosphorylated on Tyr-359 and Tyr-904 most likely by LYN. PP1-inhibited phosphorylation that follows Tyr-8 and Tyr-21 phosphorylation. In terms of processing, N-glycosylated. As to expression, detected in erythrocytes (at protein level). In terms of tissue distribution, expressed in kidney (at protein level).

It localises to the cell membrane. It is found in the basolateral cell membrane. The enzyme catalyses hydrogencarbonate(in) + chloride(out) = hydrogencarbonate(out) + chloride(in). Its activity is regulated as follows. Phenyl isothiocyanate inhibits anion transport in vitro. In terms of biological role, functions both as a transporter that mediates electroneutral anion exchange across the cell membrane and as a structural protein. Component of the ankyrin-1 complex of the erythrocyte membrane; required for normal flexibility and stability of the erythrocyte membrane and for normal erythrocyte shape via the interactions of its cytoplasmic domain with cytoskeletal proteins, glycolytic enzymes, and hemoglobin. Functions as a transporter that mediates the 1:1 exchange of inorganic anions across the erythrocyte membrane. Mediates chloride-bicarbonate exchange in the kidney, and is required for normal acidification of the urine. (Microbial infection) Acts as a receptor for P.falciparum (isolate 3D7) MSP9 and thus, facilitates merozoite invasion of erythrocytes. Acts as a receptor for P.falciparum (isolate 3D7) MSP1 and thus, facilitates merozoite invasion of erythrocytes. The protein is Band 3 anion transport protein of Homo sapiens (Human).